A 926-amino-acid polypeptide reads, in one-letter code: Rap guanine nucleotide exchange factor 3 (926 aa).

Ser-79 is modified (phosphoserine). The region spanning 110-186 (ATYPTLIRDR…RDAQFYRFPG (77 aa)) is the DEP domain. An interaction with PDE3B region spans residues 218-242 (TVALRKSPGQRTDEELDLIFEELVH). Residues 311–314 (GQLA) and 321–322 (RA) each bind 3',5'-cyclic AMP. Residues 369–388 (TSQGAGPSRPPTPGRNRYTV) are disordered. The N-terminal Ras-GEF domain occupies 384 to 521 (NRYTVMSGTP…EQYPERRRHH (138 aa)). Positions 398-422 (ELLLEAMRPDSSAHDPTETFLSDFL) are interaction with PDE3B. Phosphoserine is present on residues Ser-531 and Ser-867. A Ras-GEF domain is found at 665–892 (SAKDLAGQLT…SRISTCSEQS (228 aa)).

As to quaternary structure, interacts with PDE3B and PIK3R6; form a signaling complex that regulates phosphatidylinositol 3-kinase gamma in angiogenesis. As to expression, expressed at low levels in adult brain. Strongly expressed in parts of the neonatal brain, including the septum and the thalamus.

It localises to the cytoplasm. The protein resides in the membrane. In terms of biological role, guanine nucleotide exchange factor (GEF) for RAP1A and RAP2A small GTPases that is activated by binding cAMP. Through simultaneous binding of PDE3B to RAPGEF3 and PIK3R6 is assembled in a signaling complex in which it activates the PI3K gamma complex and which is involved in angiogenesis. Plays a role in the modulation of the cAMP-induced dynamic control of endothelial barrier function through a pathway that is independent on Rho-mediated signaling. Required for the actin rearrangement at cell-cell junctions, such as stress fibers and junctional actin. This is Rap guanine nucleotide exchange factor 3 (Rapgef3) from Rattus norvegicus (Rat).